The primary structure comprises 965 residues: SKI family transcriptional corepressor 1 (965 aa).

Disordered regions lie at residues 45–72, 278–367, 410–458, 530–592, 615–777, and 796–843; these read TQLG…SSAL, RTFS…GGGA, DDPV…GGGA, SGAP…GSYV, AYGA…FAPE, and VCTP…EDGL. 3 stretches are compositionally biased toward gly residues: residues 283-312, 356-367, and 418-442; these read QGGG…GPGC, GPAGPGGPGGGA, and EPKG…GGPG. A compositionally biased stretch (pro residues) spans 571–586; sequence LPPPLAPLPPPPPPPA. The segment covering 620-632 has biased composition (gly residues); the sequence is PARGPGPGAGSGG. Residues 641–650 show a composition bias toward polar residues; it reads EGSSSYNSAS. Composition is skewed to acidic residues over residues 654–663 and 670–679; these read DTADEPEVDV and DDEDAQEETE. The segment covering 800-823 has biased composition (basic and acidic residues); that stretch reads EAHEPDKEDNHSPADDLETRKSYP. Residues 824–835 are compositionally biased toward polar residues; sequence DQRSISQPSPAN. A coiled-coil region spans residues 858–922; sequence ENLAREELQK…DTLCNELDQE (65 aa).

This sequence belongs to the SKI family. In terms of assembly, interacts with LBX1. Interacts with SMAD1, SMAD2 and SMAD3. Present specifically in cerebellar Purkinje cells (at protein level).

It localises to the nucleus. In terms of biological role, acts as a transcriptional corepressor of LBX1. Inhibits BMP signaling. The sequence is that of SKI family transcriptional corepressor 1 (SKOR1) from Homo sapiens (Human).